A 183-amino-acid chain; its full sequence is Ferredoxin-2, mitochondrial (183 aa).

Residues 1-52 constitute a mitochondrion transit peptide; that stretch reads MAASMARGGVSARVLLQAARGTWWNRPGGTSGSGEGVALGTTRKFQATGSRP. Residues 45–65 are disordered; that stretch reads FQATGSRPAGEEDAGGPERPG. Residues 68 to 170 enclose the 2Fe-2S ferredoxin-type domain; the sequence is VNVVFVDRSG…GAEFTLPKIT (103 aa). Cysteine 105, cysteine 111, cysteine 114, and cysteine 151 together coordinate [2Fe-2S] cluster.

The protein belongs to the adrenodoxin/putidaredoxin family. In terms of assembly, component of the mitochondrial core iron-sulfur cluster (ISC) complex composed of NFS1, LYRM4, NDUFAB1, ISCU, FXN, and FDX2; this complex is a heterohexamer containing two copies of each monomer. Form a heterodimer complex with NFS1. Interacts (in both their reduced and oxidized states) with the cysteine desulfurase complex; this interaction stimulates cysteine desulfurase activity, and serves as a reductant for Fe-S cluster assembly. [2Fe-2S] cluster serves as cofactor. In terms of tissue distribution, widely expressed, with highest levels in testis, kidney and brain (at protein level). Expressed in muscle (at protein level). Expressed in fibroblasts (at protein level).

It localises to the mitochondrion. The protein localises to the mitochondrion matrix. In terms of biological role, electron donor, of the core iron-sulfur cluster (ISC) assembly complex, that acts to reduce the persulfide into sulfide during [2Fe-2S] clusters assembly on the scaffolding protein ISCU. The core iron-sulfur cluster (ISC) assembly complex is involved in the de novo synthesis of a [2Fe-2S] cluster, the first step of the mitochondrial iron-sulfur protein biogenesis. This process is initiated by the cysteine desulfurase complex (NFS1:LYRM4:NDUFAB1) that produces persulfide which is delivered on the scaffold protein ISCU in a FXN-dependent manner. Then this complex is stabilized by FDX2 which provides reducing equivalents to accomplish the [2Fe-2S] cluster assembly. Finally, the [2Fe-2S] cluster is transferred from ISCU to chaperone proteins, including HSCB, HSPA9 and GLRX5. Essential for coenzyme Q biosynthesis: together with FDXR, transfers the electrons required for the hydroxylation reaction performed by COQ6. This Homo sapiens (Human) protein is Ferredoxin-2, mitochondrial.